A 137-amino-acid chain; its full sequence is MNHTSQAFITAASGGQPPNYERIKEEYEVAEMGAPHGSASVRTTVINMPREVSVPDHVVWSLFNTLFMNFCCLGFIAYAYSVKSRDRKMVGDVTGAQAYASTAKCLNISTLVLSILMVVITIVSVIIIVLNAQNLHT.

The Cytoplasmic portion of the chain corresponds to 1–57; the sequence is MNHTSQAFITAASGGQPPNYERIKEEYEVAEMGAPHGSASVRTTVINMPREVSVPDH. Tyr20 carries the phosphotyrosine modification. Lys24 participates in a covalent cross-link: Glycyl lysine isopeptide (Lys-Gly) (interchain with G-Cter in ubiquitin). Tyr27 carries the phosphotyrosine modification. Positions 58–78 form an intramembrane region, helical; the sequence is VVWSLFNTLFMNFCCLGFIAY. The interaction with SPP1 stretch occupies residues 60-93; that stretch reads WSLFNTLFMNFCCLGFIAYAYSVKSRDRKMVGDV. S-palmitoyl cysteine attachment occurs at residues Cys71 and Cys72. The Cytoplasmic segment spans residues 79 to 109; the sequence is AYSVKSRDRKMVGDVTGAQAYASTAKCLNIS. Residues Lys83, Lys88, and Lys104 each participate in a glycyl lysine isopeptide (Lys-Gly) (interchain with G-Cter in ubiquitin) cross-link. Residue Cys105 is the site of S-palmitoyl cysteine attachment. The interval 108-133 is interaction with VAPA; that stretch reads ISTLVLSILMVVITIVSVIIIVLNAQ. The chain crosses the membrane as a helical span at residues 110-130; it reads TLVLSILMVVITIVSVIIIVL. Residues 131-137 are Extracellular-facing; it reads NAQNLHT.

The protein belongs to the CD225/Dispanin family. Interacts with ATP6V0B. Interacts with CD81. Interacts with SPP1; the interaction reduces OPN expression. Interacts with BRI3. Polyubiquitinated with both 'Lys-48' and 'Lys-63' linkages. Ubiquitination negatively regulates antiviral activity. Lys-24 is the most prevalent ubiquitination site. In terms of processing, phosphorylation at Tyr-20 is required for endosomal and lysosomal location. In terms of tissue distribution, expressed in acinar cell. Predominantly expressed in nascent primordial germ cells, as well as in gonadal germ cells.

It is found in the cell membrane. The protein resides in the late endosome membrane. Its subcellular location is the early endosome membrane. The protein localises to the lysosome membrane. It localises to the cytoplasm. It is found in the perinuclear region. Functionally, IFN-induced antiviral protein which disrupts intracellular cholesterol homeostasis. Inhibits the entry of viruses to the host cell cytoplasm by preventing viral fusion with cholesterol depleted endosomes. May inactivate new enveloped viruses which buds out of the infected cell, by letting them go out with a cholesterol depleted membrane. Active against multiple viruses, including influenza A virus, SARS coronaviruses (SARS-CoV and SARS-CoV-2), Marburg virus (MARV), Ebola virus (EBOV), Dengue virus (DNV), West Nile virus (WNV), human immunodeficiency virus type 1 (HIV-1), hepatitis C virus (HCV) and vesicular stomatitis virus (VSV). Can inhibit: influenza virus hemagglutinin protein-mediated viral entry, MARV and EBOV GP1,2-mediated viral entry, SARS-CoV and SARS-CoV-2 S protein-mediated viral entry and VSV G protein-mediated viral entry. Plays a critical role in the structural stability and function of vacuolar ATPase (v-ATPase). Establishes physical contact with the v-ATPase of endosomes which is critical for proper clathrin localization and is also required for the function of the v-ATPase to lower the pH in phagocytic endosomes thus establishing an antiviral state. In hepatocytes, IFITM proteins act in a coordinated manner to restrict HCV infection by targeting the endocytosed HCV virion for lysosomal degradation. IFITM2 and IFITM3 display anti-HCV activity that may complement the anti-HCV activity of IFITM1 by inhibiting the late stages of HCV entry, possibly in a coordinated manner by trapping the virion in the endosomal pathway and targeting it for degradation at the lysosome. Exerts opposing activities on SARS-CoV-2, including amphipathicity-dependent restriction of virus at endosomes and amphipathicity-independent enhancement of infection at the plasma membrane. The protein is Interferon-induced transmembrane protein 3 of Mus musculus (Mouse).